The following is a 758-amino-acid chain: GPI ethanolamine phosphate transferase 2 (758 aa).

3 N-linked (GlcNAc...) asparagine glycosylation sites follow: asparagine 28, asparagine 77, and asparagine 178. 3 helical membrane passes run 405 to 425 (LVAISILGACSILSLILFRNL), 431 to 451 (LLAFAPFVVQNIIIVFSSSFI), and 455 to 472 (HVIWYFAAVSLSLLQLLN). Asparagine 493 carries N-linked (GlcNAc...) asparagine glycosylation. The next 6 membrane-spanning stretches (helical) occupy residues 533-553 (PSPINFLSSMFIAFYKLMPII), 561-581 (PIIASFDYTFFVRIIWSLLLI), 598-618 (LFILLLTRLENMGLYLLYDIW), 667-687 (IFAVGILLFTSVFAGALWWCL), 698-718 (VKTFWIMSSISLTFLCISCFI), and 733-753 (LLYNASWASMYFLAKCLISTI).

It belongs to the PIGG/PIGN/PIGO family. PIGG subfamily.

The protein localises to the endoplasmic reticulum membrane. It functions in the pathway glycolipid biosynthesis; glycosylphosphatidylinositol-anchor biosynthesis. Functionally, ethanolamine phosphate transferase involved in glycosylphosphatidylinositol-anchor biosynthesis. Transfers ethanolamine phosphate to the GPI second mannose. This Schizosaccharomyces pombe (strain 972 / ATCC 24843) (Fission yeast) protein is GPI ethanolamine phosphate transferase 2 (las21).